A 320-amino-acid polypeptide reads, in one-letter code: Tryptophan--tRNA ligase (320 aa).

Residues 8–10 and 16–17 each bind ATP; these read QPT and GN. Residues 9-17 carry the 'HIGH' region motif; the sequence is PTGRPHWGN. Aspartate 131 contacts L-tryptophan. Residues 143-145, valine 182, and 189-193 contribute to the ATP site; these read GVD and KMSKS. A 'KMSKS' region motif is present at residues 189 to 193; that stretch reads KMSKS.

Belongs to the class-I aminoacyl-tRNA synthetase family. In terms of assembly, homodimer.

It is found in the cytoplasm. The catalysed reaction is tRNA(Trp) + L-tryptophan + ATP = L-tryptophyl-tRNA(Trp) + AMP + diphosphate + H(+). In terms of biological role, catalyzes the attachment of tryptophan to tRNA(Trp). The protein is Tryptophan--tRNA ligase of Rhodopirellula baltica (strain DSM 10527 / NCIMB 13988 / SH1).